The sequence spans 89 residues: MTPAELFGEGINLMLSGMGFVITFLLILIWAITTMSKLINRFFPEPVKQSKPSQKPTALSAAVQGNDLDRLRPVIVAAIAHHRRSQGLN.

Residues 13–33 (LMLSGMGFVITFLLILIWAIT) form a helical membrane-spanning segment.

The protein belongs to the OadG family. As to quaternary structure, heterotrimer of an alpha, a beta and a gamma subunit. It depends on Na(+) as a cofactor.

It is found in the cell membrane. It carries out the reaction oxaloacetate + 2 Na(+)(in) + H(+) = pyruvate + 2 Na(+)(out) + CO2. Functionally, catalyzes the decarboxylation of oxaloacetate coupled to Na(+) translocation. The polypeptide is Probable oxaloacetate decarboxylase gamma chain (Actinobacillus succinogenes (strain ATCC 55618 / DSM 22257 / CCUG 43843 / 130Z)).